Consider the following 230-residue polypeptide: Orotidine 5'-phosphate decarboxylase (230 aa).

Substrate-binding positions include Asp10, Lys32, 59–68 (DLKYHDIPNT), Thr119, Arg180, Gln189, Gly209, and Arg210. Lys61 (proton donor) is an active-site residue.

The protein belongs to the OMP decarboxylase family. Type 1 subfamily. Homodimer.

It catalyses the reaction orotidine 5'-phosphate + H(+) = UMP + CO2. The protein operates within pyrimidine metabolism; UMP biosynthesis via de novo pathway; UMP from orotate: step 2/2. Functionally, catalyzes the decarboxylation of orotidine 5'-monophosphate (OMP) to uridine 5'-monophosphate (UMP). In Haemophilus influenzae (strain ATCC 51907 / DSM 11121 / KW20 / Rd), this protein is Orotidine 5'-phosphate decarboxylase.